A 37-amino-acid chain; its full sequence is Large ribosomal subunit protein bL36 (37 aa).

It belongs to the bacterial ribosomal protein bL36 family.

This chain is Large ribosomal subunit protein bL36, found in Desulforamulus reducens (strain ATCC BAA-1160 / DSM 100696 / MI-1) (Desulfotomaculum reducens).